Here is a 759-residue protein sequence, read N- to C-terminus: Forkhead box protein M1 (759 aa).

Residues 1-92 form a disordered region; the sequence is MRTSPRRPLI…MRLPSNPPQS (92 aa). Residues 48 to 63 show a composition bias toward basic and acidic residues; that stretch reads LAHELEDMAPKSKADQ. The segment at residues 260–358 is a DNA-binding region (fork-head); sequence RPPYSYMALI…KTASPMSPAD (99 aa). Disordered stretches follow at residues 420-450, 516-535, and 596-631; these read AESS…KHLG, SANP…PSNV, and KEHF…RDPV. The span at 601 to 612 shows a compositional bias: low complexity; that stretch reads KPTTSSTPSKPT.

Localized to the animal hemisphere of early cleavage stage embryos. During neurulation, expressed in the neural folds. Later, expressed in the spinal cord and in the eye field. During tailbud stages, expression is still restricted to the neuroectoderm, predominantly to the hindbrain, the eye and the spinal cord. With ongoing development, expression is also found at lower levels in the branchial arches. At stage 35, expressed in the rhombencephalon and in the eye retina.

The protein resides in the nucleus. Transcription factor regulating the expression of cell cycle genes essential for DNA replication and mitosis. Plays a role in the control of cell proliferation. Also plays a role in DNA break repair, participating in the DNA damage checkpoint response. Promotes transcription of PHB2. In Xenopus laevis (African clawed frog), this protein is Forkhead box protein M1.